Reading from the N-terminus, the 252-residue chain is ELH type 2 (252 aa).

The signal sequence occupies residues 1 to 19 (AISLLMCLILSALCASSES). 3 propeptides span residues 20–75 (AVVH…VNNE), 92–130 (PQEVSGLKPVMMSRASASADENSLFDLYNTDGAMYQREL), and 144–185 (AAGD…SGIA). The span at 145–161 (AGDEDKAEEHNPETESH) shows a compositional bias: basic and acidic residues. The disordered stretch occupies residues 145 to 171 (AGDEDKAEEHNPETESHSRRKRSALTP). Lysine amide is present on K222.

It belongs to the molluscan ELH family. In terms of tissue distribution, bag cell neurons.

Its subcellular location is the secreted. In terms of biological role, ELH acts as a neurotransmitter locally, upon neurons of the abdominal ganglion and as a hormone by diffusing into the circulating hemolymph and modulating the activity of other organs. It specifically causes contraction of smooth muscle in the ovotestis and expulsion of the egg string. Its function is as follows. Alpha-BCP decreases the activity of a cluster of neurons in the left upper quadrant of the abdominal ganglion. Functionally, beta-BCP specifically excites 2 neurons, L1 and R1, in the abdominal ganglion. This chain is ELH type 2 (ELH2), found in Aplysia parvula (Dwarf sea hare).